The primary structure comprises 978 residues: uncharacterized protein (978 aa).

The first 27 residues, 1–27 (MHSWKKKLVVSQLALACTLAITSQANA), serve as a signal peptide directing secretion. The region spanning 713-978 (GLADNGGAWV…SANVGVKYTW (266 aa)) is the Autotransporter domain.

This is an uncharacterized protein from Salmonella typhimurium (strain LT2 / SGSC1412 / ATCC 700720).